The following is a 266-amino-acid chain: MPIPTPYEDLLRLVLDRGTAKSDRTGTGTRSLFGQQLRYDLSAGFPLITTKKVHLKSVVYELLWFLRGDSNVDWLHRHGVTIWDEWASDTGDLGPIYGVQWRSWPTPSGEHIDQISAALDLLRTDPDSRRIIVSAWNVGEIPRMALPPCHAFFQFYVADGRLSCQLYQRSADLFLGVPFNIASYALLTHMMAAQAGLSVGEFVWTGGDCHIYDNHVEQVRLQLSREPRPYPELILAHRDSIFDYTYDDVVVHNYDPHPAIKAPVAV.

Residue R24 coordinates dUMP. (6R)-5,10-methylene-5,6,7,8-tetrahydrofolate is bound at residue H54. Residue 129–130 (RR) coordinates dUMP. Catalysis depends on C149, which acts as the Nucleophile. Residues 169-172 (RSAD), N180, and 210-212 (HIY) each bind dUMP. A (6R)-5,10-methylene-5,6,7,8-tetrahydrofolate-binding site is contributed by D172. A265 is a binding site for (6R)-5,10-methylene-5,6,7,8-tetrahydrofolate.

This sequence belongs to the thymidylate synthase family. Bacterial-type ThyA subfamily. As to quaternary structure, homodimer.

It is found in the cytoplasm. The enzyme catalyses dUMP + (6R)-5,10-methylene-5,6,7,8-tetrahydrofolate = 7,8-dihydrofolate + dTMP. The protein operates within pyrimidine metabolism; dTTP biosynthesis. In terms of biological role, catalyzes the reductive methylation of 2'-deoxyuridine-5'-monophosphate (dUMP) to 2'-deoxythymidine-5'-monophosphate (dTMP) while utilizing 5,10-methylenetetrahydrofolate (mTHF) as the methyl donor and reductant in the reaction, yielding dihydrofolate (DHF) as a by-product. This enzymatic reaction provides an intracellular de novo source of dTMP, an essential precursor for DNA biosynthesis. The chain is Thymidylate synthase from Mycolicibacterium paratuberculosis (strain ATCC BAA-968 / K-10) (Mycobacterium paratuberculosis).